The chain runs to 419 residues: UDP-N-acetylglucosamine 1-carboxyvinyltransferase 2 (419 aa).

Phosphoenolpyruvate is bound at residue 22 to 23; sequence KN. Residue Arg92 participates in UDP-N-acetyl-alpha-D-glucosamine binding. Cys116 serves as the catalytic Proton donor. The residue at position 116 (Cys116) is a 2-(S-cysteinyl)pyruvic acid O-phosphothioketal. Residues 121 to 125, Asp306, and Ile328 each bind UDP-N-acetyl-alpha-D-glucosamine; that span reads RPIDL.

The protein belongs to the EPSP synthase family. MurA subfamily.

Its subcellular location is the cytoplasm. It catalyses the reaction phosphoenolpyruvate + UDP-N-acetyl-alpha-D-glucosamine = UDP-N-acetyl-3-O-(1-carboxyvinyl)-alpha-D-glucosamine + phosphate. Its pathway is cell wall biogenesis; peptidoglycan biosynthesis. Cell wall formation. Adds enolpyruvyl to UDP-N-acetylglucosamine. This Streptococcus mutans serotype c (strain ATCC 700610 / UA159) protein is UDP-N-acetylglucosamine 1-carboxyvinyltransferase 2.